Consider the following 693-residue polypeptide: UvrABC system protein B (693 aa).

Residues 35–188 (ERINNGEKDV…DQLLRQFVGI (154 aa)) enclose the Helicase ATP-binding domain. Residue 48–55 (GATGTGKS) participates in ATP binding. A Beta-hairpin motif is present at residues 101-124 (YYDYYQPEAYVPQTDTFIEKDSSV). The 163-residue stretch at 438 to 600 (QIDDLLGEIR…VDPTPLRKRI (163 aa)) folds into the Helicase C-terminal domain. The interval 612 to 634 (ADTKSLLESAGKGRSRGKAPVPV) is disordered. Residues 648 to 683 (VDLIEQLTAQMHSAAGELQFELAARLRDEVGDLKKE) form the UVR domain.

It belongs to the UvrB family. As to quaternary structure, forms a heterotetramer with UvrA during the search for lesions. Interacts with UvrC in an incision complex.

It localises to the cytoplasm. In terms of biological role, the UvrABC repair system catalyzes the recognition and processing of DNA lesions. A damage recognition complex composed of 2 UvrA and 2 UvrB subunits scans DNA for abnormalities. Upon binding of the UvrA(2)B(2) complex to a putative damaged site, the DNA wraps around one UvrB monomer. DNA wrap is dependent on ATP binding by UvrB and probably causes local melting of the DNA helix, facilitating insertion of UvrB beta-hairpin between the DNA strands. Then UvrB probes one DNA strand for the presence of a lesion. If a lesion is found the UvrA subunits dissociate and the UvrB-DNA preincision complex is formed. This complex is subsequently bound by UvrC and the second UvrB is released. If no lesion is found, the DNA wraps around the other UvrB subunit that will check the other stand for damage. This chain is UvrABC system protein B, found in Renibacterium salmoninarum (strain ATCC 33209 / DSM 20767 / JCM 11484 / NBRC 15589 / NCIMB 2235).